Reading from the N-terminus, the 110-residue chain is MSKKIITGKVVSNAMDKTITVETDRLTKHPKYHKFVRKTRRYHAHDENNECEIGDIVEIEESRKLSKTKAFVLKRIVRKNILSEEVETPDSVEEELKEAFGGEVDGTTRE.

It belongs to the universal ribosomal protein uS17 family. In terms of assembly, part of the 30S ribosomal subunit.

Its function is as follows. One of the primary rRNA binding proteins, it binds specifically to the 5'-end of 16S ribosomal RNA. This chain is Small ribosomal subunit protein uS17, found in Petrotoga mobilis (strain DSM 10674 / SJ95).